Reading from the N-terminus, the 407-residue chain is Argininosuccinate synthase (407 aa).

ATP is bound by residues 12–20 (AYSGGLDTS) and A39. Y92 and S97 together coordinate L-citrulline. G122 lines the ATP pocket. The L-aspartate site is built by T124, N128, and D129. N128 serves as a coordination point for L-citrulline. 5 residues coordinate L-citrulline: R132, S182, S191, E267, and Y279.

This sequence belongs to the argininosuccinate synthase family. Type 1 subfamily. In terms of assembly, homotetramer.

The protein localises to the cytoplasm. It catalyses the reaction L-citrulline + L-aspartate + ATP = 2-(N(omega)-L-arginino)succinate + AMP + diphosphate + H(+). It participates in amino-acid biosynthesis; L-arginine biosynthesis; L-arginine from L-ornithine and carbamoyl phosphate: step 2/3. The chain is Argininosuccinate synthase from Campylobacter fetus subsp. fetus (strain 82-40).